Consider the following 256-residue polypeptide: Putative bidirectional sugar transporter SWEET7e (256 aa).

Residues 1–9 (MVSPDLIRN) are Extracellular-facing. A helical transmembrane segment spans residues 10 to 30 (VVGIVGNAISFGLFLSPVLTF). One can recognise a MtN3/slv 1 domain in the interval 10–97 (VVGIVGNAIS…TIFFLFSNKK (88 aa)). Residues 31–45 (WRIIKEKDMKYFKAD) lie on the Cytoplasmic side of the membrane. The helical transmembrane segment at 46–66 (PYLATLLNCMLWVFYGLPIVH) threads the bilayer. At 67–69 (PNS) the chain is on the extracellular side. Residues 70–90 (ILVVTINGIGLVIEAVYLTIF) form a helical membrane-spanning segment. At 91-100 (FLFSNKKNKK) the chain is on the cytoplasmic side. Residues 101–121 (MGVVLATEALFMAAVALGVLL) form a helical membrane-spanning segment. Over 122 to 130 (GAHTHQRRS) the chain is Extracellular. The chain crosses the membrane as a helical span at residues 131 to 151 (LIVGILCVIFGTIMYSSPLTI). The MtN3/slv 2 domain maps to 133–212 (VGILCVIFGT…LMQLILDKNQ (80 aa)). Residues 152–164 (MSQVVKTKSVEYM) are Cytoplasmic-facing. The chain crosses the membrane as a helical span at residues 165 to 185 (PLLLSVVSFLNGLCWTSYALI). Arg-186 is a topological domain (extracellular). A helical membrane pass occupies residues 187-207 (FDIFITIPNGLGVLFTLMQLI). The Cytoplasmic segment spans residues 208 to 256 (LDKNQDKNLELPTVAPVAKETSIVTPVSKDDDINGSTASHVIINITKEP).

The protein belongs to the SWEET sugar transporter family. As to quaternary structure, forms homooligomers and/or heterooligomers.

Its subcellular location is the cell membrane. Mediates both low-affinity uptake and efflux of sugar across the plasma membrane. The sequence is that of Putative bidirectional sugar transporter SWEET7e (SWEET7E) from Oryza sativa subsp. japonica (Rice).